The sequence spans 272 residues: Centromere protein V-like protein 1 (272 aa).

Over residues 1 to 17 the composition is skewed to basic residues; that stretch reads MGRVRNRATAQRRRRKR. 2 disordered regions span residues 1 to 23 and 65 to 95; these read MGRV…DPPA and RRVR…KDLD. A compositionally biased stretch (pro residues) spans 79 to 90; that stretch reads APTPDPPGPAPS. Positions 133 to 246 constitute a CENP-V/GFA domain; that stretch reads HTGGCHCGAV…EEVGGGDPGE (114 aa). Cys-137, Cys-139, Cys-157, Cys-159, Cys-162, Cys-201, and Cys-204 together coordinate Zn(2+). Residues 240 to 272 are disordered; it reads GGGDPGEEAAEEHKAIHKTSSQSAPACPREQEQ.

It belongs to the Gfa family. Requires Zn(2+) as cofactor.

The chain is Centromere protein V-like protein 1 from Homo sapiens (Human).